The following is a 215-amino-acid chain: Protein NETWORKED 3B (215 aa).

Residues 5–90 (SKWWWIGANH…QKHDLLIKTS (86 aa)) form the NAB domain. Residues 134 to 165 (DETMKEELEILREENRVYKEKKEVVTRLLANL) adopt a coiled-coil conformation.

It belongs to the NET family. As to quaternary structure, interacts with F-actin.

Its function is as follows. Plant-specific actin binding protein. May be part of a membrane-cytoskeletal adapter complex. The sequence is that of Protein NETWORKED 3B from Arabidopsis thaliana (Mouse-ear cress).